A 491-amino-acid polypeptide reads, in one-letter code: Glutathione synthetase GSH2 (491 aa).

Residue Arg-128 coordinates substrate. Glu-146 lines the ATP pocket. Residues Glu-146 and Asn-148 each coordinate Mg(2+). Substrate-binding positions include 150 to 153 (VSVS), 228 to 230 (ERN), Gln-234, and 285 to 288 (RTGY). Residues Lys-324, 382–391 (KPQREGGGNN), Tyr-393, 415–418 (MELI), and Glu-442 contribute to the ATP site. Glu-386 is a binding site for Mg(2+). Arg-467 contacts substrate. ATP-binding residues include Lys-469 and Glu-475. A substrate-binding site is contributed by 478–479 (VA).

It belongs to the eukaryotic GSH synthase family. Homodimer. Mg(2+) serves as cofactor.

The catalysed reaction is gamma-L-glutamyl-L-cysteine + glycine + ATP = glutathione + ADP + phosphate + H(+). It functions in the pathway sulfur metabolism; glutathione biosynthesis; glutathione from L-cysteine and L-glutamate: step 2/2. This is Glutathione synthetase GSH2 (GSH2) from Saccharomyces cerevisiae (strain ATCC 204508 / S288c) (Baker's yeast).